A 199-amino-acid chain; its full sequence is Recombination protein RecR (199 aa).

The segment at 57-72 (CQSCRTYTEESLCPIC) adopts a C4-type zinc-finger fold. Residues 81 to 176 (STICVVETPA…VISRIAHGVP (96 aa)) form the Toprim domain.

This sequence belongs to the RecR family.

Its function is as follows. May play a role in DNA repair. It seems to be involved in an RecBC-independent recombinational process of DNA repair. It may act with RecF and RecO. The protein is Recombination protein RecR of Shewanella sp. (strain MR-4).